Consider the following 154-residue polypeptide: 3-hydroxyacyl-[acyl-carrier-protein] dehydratase FabZ (154 aa).

His55 is an active-site residue.

It belongs to the thioester dehydratase family. FabZ subfamily.

The protein resides in the cytoplasm. It carries out the reaction a (3R)-hydroxyacyl-[ACP] = a (2E)-enoyl-[ACP] + H2O. Functionally, involved in unsaturated fatty acids biosynthesis. Catalyzes the dehydration of short chain beta-hydroxyacyl-ACPs and long chain saturated and unsaturated beta-hydroxyacyl-ACPs. The polypeptide is 3-hydroxyacyl-[acyl-carrier-protein] dehydratase FabZ (Oleidesulfovibrio alaskensis (strain ATCC BAA-1058 / DSM 17464 / G20) (Desulfovibrio alaskensis)).